Reading from the N-terminus, the 210-residue chain is Large ribosomal subunit protein uL3 (210 aa).

The protein belongs to the universal ribosomal protein uL3 family. In terms of assembly, part of the 50S ribosomal subunit. Forms a cluster with proteins L14 and L19.

In terms of biological role, one of the primary rRNA binding proteins, it binds directly near the 3'-end of the 23S rRNA, where it nucleates assembly of the 50S subunit. This chain is Large ribosomal subunit protein uL3, found in Pediococcus pentosaceus (strain ATCC 25745 / CCUG 21536 / LMG 10740 / 183-1w).